We begin with the raw amino-acid sequence, 81 residues long: Envelope small membrane protein (81 aa).

The Virion surface segment spans residues 1 to 19 (MTFPRALTVIDDNGLVISI). The chain crosses the membrane as a helical span at residues 20-40 (IFWFLLIIILILFSIALLNII). At 41 to 81 (KLCMVCCNLGRTVIVPVQHAYDAYKNFMRIKAYNHDGALLV) the chain is on the intravirion side.

Belongs to the alphacoronaviruses E protein family. Homopentamer. Interacts with membrane protein M in the budding compartment of the host cell, which is located between endoplasmic reticulum and the Golgi complex. Interacts with Nucleoprotein.

The protein localises to the host Golgi apparatus membrane. Its function is as follows. Plays a central role in virus morphogenesis and assembly. Acts as a viroporin and self-assembles in host membranes forming pentameric protein-lipid pores that allow ion transport. Also plays a role in the induction of apoptosis. In Porcine transmissible gastroenteritis coronavirus (strain FS772/70) (TGEV), this protein is Envelope small membrane protein.